The following is a 938-amino-acid chain: Glutamate receptor ionotropic, NMDA 1 (938 aa).

The signal sequence occupies residues 1-18 (MSTMHLLTFALLFSCSFA). Residues 19–559 (RAACDPKIVN…TLDSFMQPFQ (541 aa)) are Extracellular-facing. Residues Asn61, Asn203, Asn239, Asn276, Asn300, Asn350, Asn368, Asn440, Asn471, and Asn491 are each glycosylated (N-linked (GlcNAc...) asparagine). The cysteines at positions 79 and 308 are disulfide-linked. Intrachain disulfides connect Cys420-Cys454 and Cys436-Cys455. Residues Pro516, Thr518, and Arg523 each contribute to the glycine site. Residues 560–580 (STLWLLVGLSVHVVAVMLYLL) form a helical membrane-spanning segment. Over 581 to 602 (DRFSPFGRFKVNSEEEEEDALT) the chain is Cytoplasmic. Residues 603–624 (LSSAMWFSWGVLLNSGIGEGAP) constitute an intramembrane region (discontinuously helical). Residues 603–624 (LSSAMWFSWGVLLNSGIGEGAP) form a pore-forming region. Residues 625–630 (RSFSAR) are Cytoplasmic-facing. A helical transmembrane segment spans residues 631 to 647 (ILGMVWAGFAMIIVASY). The Extracellular segment spans residues 648 to 812 (TANLAAFLVL…NAPATLTFEN (165 aa)). Asn674 carries N-linked (GlcNAc...) asparagine glycosylation. Residues Ser688 and Asp732 each contribute to the glycine site. Cys744 and Cys798 are oxidised to a cystine. The N-linked (GlcNAc...) asparagine glycan is linked to Asn771. Residues 813–833 (MAGVFMLVAGGIVAGIFLIFI) form a helical membrane-spanning segment. At 834-938 (EIAYKRHKDA…LQLCSRHRES (105 aa)) the chain is on the cytoplasmic side. Residue Lys877 is modified to Phosphoserine. Phosphoserine; by PKC occurs at positions 889, 890, 896, and 897. The segment at 889–938 (SSFKRRRSSKDTSTGGGRGALQNQKDTVLPRRAIEREEGQLQLCSRHRES) is disordered. At Lys898 the chain carries Phosphoserine. Positions 916–927 (VLPRRAIEREEG) are enriched in basic and acidic residues.

This sequence belongs to the glutamate-gated ion channel (TC 1.A.10.1) family. NR1/GRIN1 subfamily. In terms of assembly, heterotetramer; the NMDAR subunits are modular and harbor tiered domains that function in concert to regulate opening and closing of the cation-selective ion channel pore. Forms heterotetrameric channels composed of two GluN1/zeta subunits (GRIN1), and two identical GluN2/epsilon subunits (GRIN2A, GRIN2B, GRIN2C or GRIN2D) or GluN3 subunits (GRIN3A or GRIN3B) (in vitro). Can also form heterotetrameric channels that contain at least two GluN1 subunits and at least two different GluN2 subunits (or a combination of one GluN2 and one GluN3 subunits) (in vitro). In vivo, the subunit composition may vary in function of the expression levels of the different subunits. Found in a complex with GRIN2A or GRIN2B, GRIN3A and PPP2CB. Found in a complex with GRIN2A or GRIN2B and GRIN3B;. Interacts with SNX27 (via PDZ domain); the interaction is required for recycling to the plasma membrane when endocytosed and prevent degradation in lysosomes. Interacts with DLG4 and MPDZ. Interacts with LRFN1 and LRFN2. Interacts with MYZAP. Found in a complex with DLG4 and PRR7. Found in a complex with GRIN2B and PRR7. Interacts with PRR7; the interaction is reduced following NMDA receptor activity. NMDA is probably regulated by C-terminal phosphorylation of an isoform of NR1 by PKC. Dephosphorylated on Ser-897 probably by protein phosphatase 2A (PPP2CB). Its phosphorylated state is influenced by the formation of the NMDAR-PPP2CB complex and the NMDAR channel activity. Detected throughout the brain, in brain cortex, cerebellum, thalamus and olfactory bulb.

It is found in the cell membrane. It localises to the postsynaptic cell membrane. The protein localises to the synaptic cell membrane. Its subcellular location is the postsynaptic density membrane. The enzyme catalyses Ca(2+)(in) = Ca(2+)(out). The catalysed reaction is Na(+)(in) = Na(+)(out). It carries out the reaction K(+)(in) = K(+)(out). Its activity is regulated as follows. NMDA glutamate receptor activity is potentiated by Zn2(+) in a dose-dependent fashion. The potentiating effect of Zn2(+) is at submicromolar concentrations and its inhibitory action is at high micromolar to millimolar concentrations. Excitatory glycine receptors are inhibited by D-serine at 100uM. Component of N-methyl-D-aspartate (NMDA) receptors (NMDARs) that function as heterotetrameric, ligand-gated cation channels with high calcium permeability and voltage-dependent block by Mg(2+). NMDARs participate in synaptic plasticity for learning and memory formation by contributing to the long-term potentiation (LTP). Channel activation requires binding of the neurotransmitter L-glutamate to the GluN2 subunit, glycine or D-serine binding to the GluN1 subunit, plus membrane depolarization to eliminate channel inhibition by Mg(2+). NMDARs mediate simultaneously the potasium efflux and the influx of calcium and sodium. Each GluN2 or GluN3 subunit confers differential attributes to channel properties, including activation, deactivation and desensitization kinetics, pH sensitivity, Ca2(+) permeability, and binding to allosteric modulators. Forms excitatory glycinergic receptor complexes with GluN3 alone which are activated by glycine binding to the GluN1 and GluN3 subunits. The protein is Glutamate receptor ionotropic, NMDA 1 of Rattus norvegicus (Rat).